A 119-amino-acid polypeptide reads, in one-letter code: Ribonuclease P protein component (119 aa).

This sequence belongs to the RnpA family. As to quaternary structure, consists of a catalytic RNA component (M1 or rnpB) and a protein subunit.

It carries out the reaction Endonucleolytic cleavage of RNA, removing 5'-extranucleotides from tRNA precursor.. Functionally, RNaseP catalyzes the removal of the 5'-leader sequence from pre-tRNA to produce the mature 5'-terminus. It can also cleave other RNA substrates such as 4.5S RNA. The protein component plays an auxiliary but essential role in vivo by binding to the 5'-leader sequence and broadening the substrate specificity of the ribozyme. The chain is Ribonuclease P protein component from Salmonella schwarzengrund (strain CVM19633).